The primary structure comprises 226 residues: MEQEICAISFSGGQDSTTLAVWAKKRFKKVYLVGFDYAQKHSVELECAQKIASLLQLPYEIIPLDFLENITHSALFKNSNDLMGHSHAQNKDLPNSFVPNRNAIFITLLHSYAQKIGASNIALGVSQADFSGYPDCKEDFIKSIEHALNLGSNTAIKILTPLMFLNKAQEFQMAKDLGVLDLVIKETHTCYQGERKILHAYGYGCGECPACQLRKKGYEEFESNKK.

Phe10 to Ala20 is an ATP binding site. 4 residues coordinate Zn(2+): Cys190, Cys205, Cys208, and Cys211.

Belongs to the QueC family. Zn(2+) serves as cofactor.

The enzyme catalyses 7-carboxy-7-deazaguanine + NH4(+) + ATP = 7-cyano-7-deazaguanine + ADP + phosphate + H2O + H(+). It functions in the pathway purine metabolism; 7-cyano-7-deazaguanine biosynthesis. Its function is as follows. Catalyzes the ATP-dependent conversion of 7-carboxy-7-deazaguanine (CDG) to 7-cyano-7-deazaguanine (preQ(0)). The sequence is that of 7-cyano-7-deazaguanine synthase from Helicobacter pylori (strain Shi470).